A 248-amino-acid polypeptide reads, in one-letter code: Proteasome subunit alpha type-5 (248 aa).

Belongs to the peptidase T1A family. In terms of assembly, the 26S proteasome consists of a 20S proteasome core and two 19S regulatory subunits. The 20S proteasome core is composed of 28 subunits that are arranged in four stacked rings, resulting in a barrel-shaped structure. The two end rings are each formed by seven alpha subunits, and the two central rings are each formed by seven beta subunits. The catalytic chamber with the active sites is on the inside of the barrel.

The protein localises to the cytoplasm. The protein resides in the nucleus. Functionally, the proteasome is a multicatalytic proteinase complex which is characterized by its ability to cleave peptides with Arg, Phe, Tyr, Leu, and Glu adjacent to the leaving group at neutral or slightly basic pH. The proteasome has an ATP-dependent proteolytic activity. The sequence is that of Proteasome subunit alpha type-5 (pas-5) from Caenorhabditis elegans.